We begin with the raw amino-acid sequence, 310 residues long: Ribose-phosphate pyrophosphokinase (310 aa).

ATP is bound by residues 33–35 (DGE) and 92–93 (RQ). The Mg(2+) site is built by histidine 127 and aspartate 166. Residue lysine 189 is part of the active site. D-ribose 5-phosphate is bound by residues arginine 191, aspartate 215, and 219-223 (DTAGT).

Belongs to the ribose-phosphate pyrophosphokinase family. Class I subfamily. In terms of assembly, homohexamer. It depends on Mg(2+) as a cofactor.

The protein localises to the cytoplasm. It catalyses the reaction D-ribose 5-phosphate + ATP = 5-phospho-alpha-D-ribose 1-diphosphate + AMP + H(+). Its pathway is metabolic intermediate biosynthesis; 5-phospho-alpha-D-ribose 1-diphosphate biosynthesis; 5-phospho-alpha-D-ribose 1-diphosphate from D-ribose 5-phosphate (route I): step 1/1. Involved in the biosynthesis of the central metabolite phospho-alpha-D-ribosyl-1-pyrophosphate (PRPP) via the transfer of pyrophosphoryl group from ATP to 1-hydroxyl of ribose-5-phosphate (Rib-5-P). This is Ribose-phosphate pyrophosphokinase from Bordetella pertussis (strain Tohama I / ATCC BAA-589 / NCTC 13251).